The sequence spans 228 residues: 2-C-methyl-D-erythritol 4-phosphate cytidylyltransferase (228 aa).

Belongs to the IspD/TarI cytidylyltransferase family. IspD subfamily.

It catalyses the reaction 2-C-methyl-D-erythritol 4-phosphate + CTP + H(+) = 4-CDP-2-C-methyl-D-erythritol + diphosphate. It functions in the pathway isoprenoid biosynthesis; isopentenyl diphosphate biosynthesis via DXP pathway; isopentenyl diphosphate from 1-deoxy-D-xylulose 5-phosphate: step 2/6. Functionally, catalyzes the formation of 4-diphosphocytidyl-2-C-methyl-D-erythritol from CTP and 2-C-methyl-D-erythritol 4-phosphate (MEP). This Geobacillus kaustophilus (strain HTA426) protein is 2-C-methyl-D-erythritol 4-phosphate cytidylyltransferase.